A 483-amino-acid chain; its full sequence is Probable L-xylulose kinase (483 aa).

It belongs to the FGGY kinase family. In terms of assembly, homodimer.

The catalysed reaction is L-xylulose + ATP = L-xylulose 5-phosphate + ADP + H(+). This is Probable L-xylulose kinase (lyx) from Pasteurella multocida (strain Pm70).